The sequence spans 626 residues: MGSRTTISILVVLLLGLVQLAISGHDYKQALSKSILFFEAQRSGHLPPNQRVSWRSHSGLYDGKSSGVDLVGGYYDAGDNVKFGLPMAFTVTTMCWSIIEYGGQLESNGELGHAIDAVKWGTDYFIKAHPEPNVLYGEVGDGKSDHYCWQRPEEMTTDRRAYKIDRNNPGSDLAGETAAAMAAASIVFRRSDPSYSAELLRHAHQLFEFADKYRGKYDSSITVAQKYYRSVSGYNDELLWAAAWLYQATNDKYYLDYLGKNGDSMGGTGWSMTEFGWDVKYAGVQTLVAKVLMQGKGGEHTAVFERYQQKAEQFMCSLLGKSTKNIKKTPGGLIFRQSWNNMQFVTSASFLATVYSDYLSYSKRDLLCSQGNISPSQLLEFSKSQVDYILGDNPRATSYMVGYGENYPRQVHHRGSSIVSFNVDQKFVTCRGGYATWFSRKGSDPNVLTGALVGGPDAYDNFADQRDNYEQTEPATYNNAPLLGVLARLISGSTGFDQLLPGVSPTPSPVIIKPAPVPQRKPTKPPAASSPSPITISQKMTNSWKNEGKVYYRYSTILTNRSTKTLKILKISITKLYGPIWGVTKTGNSFSFPSWMQSLPSGKSMEFVYIHSASPADVLVSNYSLE.

The N-terminal stretch at 1–23 (MGSRTTISILVVLLLGLVQLAIS) is a signal peptide. D79 (nucleophile) is an active-site residue. Catalysis depends on residues H412, D464, and E473. The disordered stretch occupies residues 515-536 (APVPQRKPTKPPAASSPSPITI). Positions 526–536 (PAASSPSPITI) are enriched in low complexity. N-linked (GlcNAc...) asparagine glycans are attached at residues N560 and N622.

It belongs to the glycosyl hydrolase 9 (cellulase E) family.

It is found in the secreted. The catalysed reaction is Endohydrolysis of (1-&gt;4)-beta-D-glucosidic linkages in cellulose, lichenin and cereal beta-D-glucans.. The chain is Endoglucanase 19 from Arabidopsis thaliana (Mouse-ear cress).